The primary structure comprises 519 residues: Flavonoid 8-hydroxylase 2, chloroplastic (519 aa).

A chloroplast-targeting transit peptide spans 1–46 (MEVLQASSLSFQLLRRHSRNNLINKFRNPSLPRIHMPRQNIDLKTF). The 112-residue stretch at 77 to 188 (WYPVASVCDL…SCVRNGIVWF (112 aa)) folds into the Rieske domain. [2Fe-2S] cluster contacts are provided by Cys-119, His-121, Cys-139, and His-142. Fe cation contacts are provided by His-241 and His-246. The Redox-active motif signature appears at 447 to 450 (CSSC). 2 consecutive transmembrane segments (helical) span residues 462 to 478 (IGLQ…AAAV) and 485 to 501 (YSMV…SKWL).

Requires [2Fe-2S] cluster as cofactor. As to expression, glandular trichome-specific expression in leaves.

The protein resides in the plastid. It is found in the chloroplast membrane. Its subcellular location is the cytoplasm. The catalysed reaction is salvigenin + 2 reduced [2Fe-2S]-[ferredoxin] + O2 + 2 H(+) = 8-hydroxysalvigenin + 2 oxidized [2Fe-2S]-[ferredoxin] + H2O. Its pathway is flavonoid metabolism. In terms of biological role, rieske-type, PAO-family oxygenase involved in the biosynthesis of polymethoxylated flavonoids natural products such as nevadensin and salvigenin, aroma compounds which contribute to the flavor of sweet basil, and exhibit pharmacological activities such as anti-allergic, anti-oxidant, antibacterial, anti-proliferative, and anti-inflammatory effects. Catalyzes the hydroxylation of salvigenin to produce 8-hydroxysalvigenin (8-OH-SALV). This is Flavonoid 8-hydroxylase 2, chloroplastic from Ocimum basilicum (Sweet basil).